A 468-amino-acid chain; its full sequence is 3-isopropylmalate dehydratase large subunit (468 aa).

[4Fe-4S] cluster contacts are provided by cysteine 347, cysteine 407, and cysteine 410.

It belongs to the aconitase/IPM isomerase family. LeuC type 1 subfamily. Heterodimer of LeuC and LeuD. The cofactor is [4Fe-4S] cluster.

The catalysed reaction is (2R,3S)-3-isopropylmalate = (2S)-2-isopropylmalate. The protein operates within amino-acid biosynthesis; L-leucine biosynthesis; L-leucine from 3-methyl-2-oxobutanoate: step 2/4. Catalyzes the isomerization between 2-isopropylmalate and 3-isopropylmalate, via the formation of 2-isopropylmaleate. The protein is 3-isopropylmalate dehydratase large subunit of Glaesserella parasuis serovar 5 (strain SH0165) (Haemophilus parasuis).